Here is a 234-residue protein sequence, read N- to C-terminus: 2,3-bisphosphoglycerate-dependent phosphoglycerate mutase 1 (234 aa).

Residues 14 to 21 (RHGQSIWN), 27 to 28 (TG), R66, and 93 to 96 (ERHY) each bind substrate. The active-site Tele-phosphohistidine intermediate is H15. E93 serves as the catalytic Proton donor/acceptor.

Belongs to the phosphoglycerate mutase family. BPG-dependent PGAM subfamily. In terms of assembly, homodimer.

It catalyses the reaction (2R)-2-phosphoglycerate = (2R)-3-phosphoglycerate. Its pathway is carbohydrate degradation; glycolysis; pyruvate from D-glyceraldehyde 3-phosphate: step 3/5. Its function is as follows. Catalyzes the interconversion of 2-phosphoglycerate and 3-phosphoglycerate. In Nitrosomonas europaea (strain ATCC 19718 / CIP 103999 / KCTC 2705 / NBRC 14298), this protein is 2,3-bisphosphoglycerate-dependent phosphoglycerate mutase 1.